Reading from the N-terminus, the 597-residue chain is Coronatine-insensitive protein homolog 1b (597 aa).

In terms of domain architecture, F-box spans 22 to 64 (SIPEEALHLVLGYVDDPRDREAVSLVCRRWHRIDALTRKHVTV). 5 residues coordinate jasmonate: Arg92, Arg353, Tyr391, Arg414, and Arg501.

In terms of assembly, interacts with TIFY10C/JAZ8 in a coronatine-dependent manner. Interacts with TIFY3/JAZ1, TIFY6A/JAZ3, TIFY6B/JAZ4, TIFY10A/JAZ6, TIFY10B/JAZ7, TIFY11A/JAZ9, TIFY11B/JAZ10, TIFY11C/JAZ11 and TIFY11D/JAZ12 in a coronatine-dependent manner. Expressed in roots, shoots, leaf sheaths and leaf blades.

Involved in jasmonate (JA) signaling. Required for jasmonate signaling in plant defense responses. Can complement Arabidopsis coi1-1 mutant and restore jasmonate signaling. Component of SCF(COI1) E3 ubiquitin ligase complexes, which may mediate the ubiquitination and subsequent proteasomal degradation of target proteins, including TIFY/JAZ family. The sequence is that of Coronatine-insensitive protein homolog 1b from Oryza sativa subsp. japonica (Rice).